Reading from the N-terminus, the 240-residue chain is MSLNKTIYEGKAKVIIETEDSSTVIQYFKDDVTAFNKEKYEIIEGKGIINNHVSAFIMEKLEEAGISTHFINTLNEREQLVKKLKIIPLEVVVRNIAAGSFCKRFNIKEGEALTSPIIEFFYKNDDLADPMVNENHILYFGWLSHKEMEEVKTTTLKINKILVDLFSNANIYLVDLKLEFGKLINNSTKIILADEISPDNCRLWDKNTHKKLDKDVFRLNLGNLKEAYSEVAKRLSVKLD.

Belongs to the SAICAR synthetase family.

It catalyses the reaction 5-amino-1-(5-phospho-D-ribosyl)imidazole-4-carboxylate + L-aspartate + ATP = (2S)-2-[5-amino-1-(5-phospho-beta-D-ribosyl)imidazole-4-carboxamido]succinate + ADP + phosphate + 2 H(+). It functions in the pathway purine metabolism; IMP biosynthesis via de novo pathway; 5-amino-1-(5-phospho-D-ribosyl)imidazole-4-carboxamide from 5-amino-1-(5-phospho-D-ribosyl)imidazole-4-carboxylate: step 1/2. The sequence is that of Phosphoribosylaminoimidazole-succinocarboxamide synthase from Wolbachia pipientis subsp. Culex pipiens (strain wPip).